The sequence spans 433 residues: Lipase 2 (433 aa).

Positions 165-167 (HGG) match the Involved in the stabilization of the negatively charged intermediate by the formation of the oxyanion hole motif. Residue Ser-239 is the Charge relay system of the active site. Active-site residues include Asp-361 and His-391.

The protein belongs to the 'GDXG' lipolytic enzyme family.

The enzyme catalyses a triacylglycerol + H2O = a diacylglycerol + a fatty acid + H(+). The polypeptide is Lipase 2 (lip2) (Moraxella sp. (strain TA144)).